Reading from the N-terminus, the 248-residue chain is tRNA uridine(34) hydroxylase (248 aa).

In terms of domain architecture, Rhodanese spans 127–221 (RGRPLVLLDT…YFEEVGGEGY (95 aa)). Catalysis depends on cysteine 181, which acts as the Cysteine persulfide intermediate.

The protein belongs to the TrhO family.

The catalysed reaction is uridine(34) in tRNA + AH2 + O2 = 5-hydroxyuridine(34) in tRNA + A + H2O. In terms of biological role, catalyzes oxygen-dependent 5-hydroxyuridine (ho5U) modification at position 34 in tRNAs. The polypeptide is tRNA uridine(34) hydroxylase (Xanthomonas euvesicatoria pv. vesicatoria (strain 85-10) (Xanthomonas campestris pv. vesicatoria)).